The sequence spans 276 residues: MLPCRRLVLSCKNQAASFLRRCGPSKRIQSVNYCKSTRQGHEIPDVKPLFPTGGGTQAPSRSRARYAVPAILLGFAGFVGFLHYNDERRAVPRGQASSNSGCGCGSNTTVKGPIIGGPFTLVSTENKIVTENDFCGKWVLLYFGYSFSPDVGPEQLKMMSKAVDKLESKHNEKILPVFVTLDPQRDTPSHLHAYLKEFDSRILGLTGTASAMRQMAQEYRVYFKKVQEDGEDYLVDTSHNMYLINPKMEIVRCFGVEYNPDELSQELLKEVASVSQ.

The N-terminal 14 residues, 1–14 (MLPCRRLVLSCKNQ), are a transit peptide targeting the mitochondrion. Residues 66–82 (YAVPAILLGFAGFVGFL) form a helical membrane-spanning segment. Residues 110 to 273 (VKGPIIGGPF…SQELLKEVAS (164 aa)) enclose the Thioredoxin domain.

This sequence belongs to the SCO1/2 family. In terms of tissue distribution, expressed in the whole plant with highest expression in imbibed seeds and embryos, and the root hair zone.

It localises to the mitochondrion inner membrane. Its function is as follows. Thought to play a role in cellular copper homeostasis, mitochondrial redox signaling or insertion of copper into the active site of COX. Participates in copper and redox homeostasis. The chain is Protein SCO1 homolog 2, mitochondrial (HCC2) from Arabidopsis thaliana (Mouse-ear cress).